The sequence spans 769 residues: Protein transport protein sec39 (769 aa).

It belongs to the SEC39 family. As to quaternary structure, component of a peripheral membrane protein complex consisting of dsl1, sec39 and tip20.

It localises to the endoplasmic reticulum membrane. Required for protein transport between the Golgi and the endoplasmic reticulum. May contribute to tethering of coatomer-coated retrograde transport vesicles to the ER membrane through interaction with and stabilization of the SNARE complex. The chain is Protein transport protein sec39 from Schizosaccharomyces pombe (strain 972 / ATCC 24843) (Fission yeast).